Reading from the N-terminus, the 72-residue chain is UPF0270 protein PM1156 (72 aa).

It belongs to the UPF0270 family.

The chain is UPF0270 protein PM1156 from Pasteurella multocida (strain Pm70).